Reading from the N-terminus, the 554-residue chain is Solute carrier family 22 member 22 (554 aa).

Residues 1–15 lie on the Cytoplasmic side of the membrane; it reads MDFDEILHHVGDSGR. The chain crosses the membrane as a helical span at residues 16 to 36; it reads FQICMIILLNILSLVLSPHDV. Over 37 to 144 the chain is Extracellular; it reads LENFTAAIPA…DLVCDFQSFK (108 aa). N39 carries an N-linked (GlcNAc...) asparagine glycan. A helical transmembrane segment spans residues 145–165; the sequence is YYAQATSLAGHLVSCPLSGII. Residues 166-172 are Cytoplasmic-facing; it reads SDRFGRK. Residues 173-193 traverse the membrane as a helical segment; it reads PLLMYCSLAYGAVGTYCAFAP. N194 is a glycosylation site (N-linked (GlcNAc...) asparagine). Topologically, residues 194-199 are extracellular; sequence NFSVYC. The helical transmembrane segment at 200–220 threads the bilayer; that stretch reads VLRFLLSAFQSTILINSLILV. Over 221–231 the chain is Cytoplasmic; it reads LEEASVQWHPT. A helical membrane pass occupies residues 232 to 252; that stretch reads IIVLSGLFNSIGQGVLGGLAY. The Extracellular portion of the chain corresponds to 253–258; the sequence is VISDWH. Residues 259–279 form a helical membrane-spanning segment; sequence LLQLAYALPFFIFFVLFCWVP. The Cytoplasmic segment spans residues 280-347; the sequence is ESVRWLIITG…DIFINPLIRK (68 aa). A helical transmembrane segment spans residues 348–368; the sequence is IVLSNSSLLFAELFSFVGLLL. Topologically, residues 369-376 are extracellular; sequence DVQLLGKN. Residues 377 to 397 traverse the membrane as a helical segment; the sequence is MFLTQIFLGAIDVPSKSLTYF. At 398-405 the chain is on the cytoplasmic side; it reads TIRNVSRR. The chain crosses the membrane as a helical span at residues 406–426; sequence PLIAFLLLTTGSCITITIFIS. The Extracellular portion of the chain corresponds to 427 to 434; that stretch reads EEMYVLRT. The helical transmembrane segment at 435 to 455 threads the bilayer; sequence IIFILGKGCFAAFTCISTTYI. The Cytoplasmic portion of the chain corresponds to 456-466; the sequence is NELSPVELRST. Residues 467–487 traverse the membrane as a helical segment; the sequence is LNGVFLAVVRLAGVLSALTLA. Residues 488 to 491 lie on the Extracellular side of the membrane; that stretch reads TRKY. Residues 492–512 form a helical membrane-spanning segment; sequence FVYLPMILYGVLPIVATISIL. At 513–554 the chain is on the cytoplasmic side; sequence FLPETFNLPHTDIIKDMEKRKRLMSKNISKKEGQDFLETTEC.

Belongs to the major facilitator (TC 2.A.1) superfamily. Organic cation transporter (TC 2.A.1.19) family. In terms of tissue distribution, specifically expressed in kidney where it is found in proximal convoluted tubules (at protein level). Colocalizes with the prostaglandin-inactivating enzyme HPGD in kidney (at protein level). Not detected in other tissues tested.

The protein localises to the basolateral cell membrane. Functionally, sodium-independent organic anion transporter which exhibits high specificity for a subset of prostaglandins including prostaglandin E2 (PGE2), prostaglandin E1 (PGE1), prostaglandin F2-alpha (PGF2-alpha) and prostaglandin D2 (PGD2). This is Solute carrier family 22 member 22 from Mus musculus (Mouse).